The primary structure comprises 368 residues: Aminomethyltransferase (368 aa).

This sequence belongs to the GcvT family. The glycine cleavage system is composed of four proteins: P, T, L and H.

The catalysed reaction is N(6)-[(R)-S(8)-aminomethyldihydrolipoyl]-L-lysyl-[protein] + (6S)-5,6,7,8-tetrahydrofolate = N(6)-[(R)-dihydrolipoyl]-L-lysyl-[protein] + (6R)-5,10-methylene-5,6,7,8-tetrahydrofolate + NH4(+). In terms of biological role, the glycine cleavage system catalyzes the degradation of glycine. In Thermoanaerobacter pseudethanolicus (strain ATCC 33223 / 39E) (Clostridium thermohydrosulfuricum), this protein is Aminomethyltransferase.